The chain runs to 225 residues: Protein-L-isoaspartate O-methyltransferase (225 aa).

Ser75 is an active-site residue.

It belongs to the methyltransferase superfamily. L-isoaspartyl/D-aspartyl protein methyltransferase family.

The protein resides in the cytoplasm. The enzyme catalyses [protein]-L-isoaspartate + S-adenosyl-L-methionine = [protein]-L-isoaspartate alpha-methyl ester + S-adenosyl-L-homocysteine. Functionally, catalyzes the methyl esterification of L-isoaspartyl residues in peptides and proteins that result from spontaneous decomposition of normal L-aspartyl and L-asparaginyl residues. It plays a role in the repair and/or degradation of damaged proteins. In Xanthomonas euvesicatoria pv. vesicatoria (strain 85-10) (Xanthomonas campestris pv. vesicatoria), this protein is Protein-L-isoaspartate O-methyltransferase.